A 236-amino-acid chain; its full sequence is Chorionic somatomammotropin hormone (236 aa).

Positions 1 to 36 are cleaved as a signal peptide; that stretch reads MAPASSHREHQWTCNLVRGSRLLLLLVVSNLILCQG. 3 cysteine pairs are disulfide-bonded: Cys44–Cys51, Cys97–Cys212, and Cys229–Cys234.

Belongs to the somatotropin/prolactin family.

It localises to the secreted. The chain is Chorionic somatomammotropin hormone (CSH) from Ovis aries (Sheep).